Consider the following 627-residue polypeptide: Carene synthase, chloroplastic (627 aa).

The transit peptide at 1–36 (MSVISILPLASKSCLYKSLMSSTHELKALCRPIATL) directs the protein to the chloroplast. Mg(2+)-binding residues include D378, D382, and D530. Residues 378-382 (DDMYD) carry the DDXXD motif motif.

The protein belongs to the terpene synthase family. Tpsd subfamily. It depends on Mg(2+) as a cofactor. Mn(2+) is required as a cofactor.

Its subcellular location is the plastid. It is found in the chloroplast. The enzyme catalyses (2E)-geranyl diphosphate = (+)-car-3-ene + diphosphate. Its pathway is terpene metabolism; oleoresin biosynthesis. Its function is as follows. Terpene synthase (TPS) involved in defensive oleoresin formation in conifers in response to insect attack or other injury. In Picea abies (Norway spruce), this protein is Carene synthase, chloroplastic (JF67).